The chain runs to 541 residues: Cytochrome P450 monooxygenase claU (541 aa).

Residues 12–32 (VIDTLVILFSTWAFLGLIRVI) form a helical membrane-spanning segment. Cys-480 provides a ligand contact to heme.

This sequence belongs to the cytochrome P450 family. The cofactor is heme.

It is found in the membrane. The protein operates within secondary metabolite biosynthesis; terpenoid biosynthesis. Cytochrome P450 monooxygenase; part of the gene cluster that mediates the biosynthesis of clavilactone A, a meroterpenoid that features a unique benzo-fused ten-membered carbocyclic ring unit with an alpha,beta-epoxy-gamma-lactone moiety, forming an intriguing 10/5/3 tricyclic nested skeleton. Cytochrome P450 monooxygenases claO, claP, claQ, claU, and claW are close orthologs, suggesting that a redundant function or pseudogenes are present in the cla cluster. These monoxygenases are not involved in clavilactone A biosynthesis nor its modification. ClaR, ClaS and ClaT are sufficient to produce clavilactone A. The biosynthesis begins with the prenyltransferase claS that transfers geranyl pyrophosphate (GPP) to hydroquinone to produces geranylhydroquinone. The cytochrome P450 monooxygenase claR then catalyzes the diradical coupling reaction between the intramolecular hydroquinone and allyl moieties to form the benzo-fused ten-membered carbocyclic ring unit of wigantol. Finally the cytochrome P450 monooxygenase claT exquisitely and stereoselectively assembles the alpha,beta-epoxy-gamma-lactone moiety, producing clavilactone A via arnebinol A. The sequence is that of Cytochrome P450 monooxygenase claU from Ampulloclitocybe clavipes (Club foot).